Reading from the N-terminus, the 341-residue chain is Phosphate acyltransferase (341 aa).

The protein belongs to the PlsX family. Homodimer. Probably interacts with PlsY.

Its subcellular location is the cytoplasm. It carries out the reaction a fatty acyl-[ACP] + phosphate = an acyl phosphate + holo-[ACP]. The protein operates within lipid metabolism; phospholipid metabolism. Functionally, catalyzes the reversible formation of acyl-phosphate (acyl-PO(4)) from acyl-[acyl-carrier-protein] (acyl-ACP). This enzyme utilizes acyl-ACP as fatty acyl donor, but not acyl-CoA. In Lacticaseibacillus casei (strain BL23) (Lactobacillus casei), this protein is Phosphate acyltransferase.